Consider the following 215-residue polypeptide: Probable maleylacetoacetate isomerase (215 aa).

One can recognise a GST N-terminal domain in the interval 2 to 85 (MSLILYGYWR…YLDETYPAPR (84 aa)). Residues 90 to 215 (RGAERYQVKA…AAPENQPDAC (126 aa)) form the GST C-terminal domain.

This sequence belongs to the GST superfamily. Zeta family.

The enzyme catalyses 4-maleylacetoacetate = 4-fumarylacetoacetate. Its pathway is amino-acid degradation; L-phenylalanine degradation; acetoacetate and fumarate from L-phenylalanine: step 5/6. The sequence is that of Probable maleylacetoacetate isomerase (maiA) from Vibrio cholerae serotype O1 (strain ATCC 39315 / El Tor Inaba N16961).